The following is a 207-amino-acid chain: Reticulon-1-A (207 aa).

The region spanning Ala21–Glu207 is the Reticulon domain. 2 consecutive transmembrane segments (helical) span residues Ile35 to Val55 and Val139 to Met159.

In terms of tissue distribution, expressed in the animal hemisphere (presumptive neural ectoderm) of blastula and gastrula stage embryos, and along the anterior neural border, in the panplacodal primordium, and in the dorsolateral side of archenteron roof of late neurula embryos. At the tailbud stage, expression localizes to the central nervous system, including the spinal cord, prosencephalon, mesencephalon and rhombencephalon, as well as the lateral line placode, otic vesicle and pronephros.

The protein resides in the endoplasmic reticulum membrane. It localises to the nucleus. In terms of biological role, inhibits amyloid precursor protein processing, probably by blocking BACE1 activity. This Xenopus laevis (African clawed frog) protein is Reticulon-1-A (rtn1-a).